The primary structure comprises 333 residues: NADH-quinone oxidoreductase subunit H (333 aa).

8 helical membrane passes run 15-35 (IALF…FVTY), 88-108 (YVLA…VLPF), 117-137 (IGVG…GVVA), 165-185 (LVMS…VDIV), 191-211 (VWFI…AVAE), 241-261 (FFML…TILF), 274-294 (IPGA…LIWF), and 313-333 (VLLP…AWFF).

The protein belongs to the complex I subunit 1 family. NDH-1 is composed of 14 different subunits. Subunits NuoA, H, J, K, L, M, N constitute the membrane sector of the complex.

It localises to the cell membrane. It carries out the reaction a quinone + NADH + 5 H(+)(in) = a quinol + NAD(+) + 4 H(+)(out). NDH-1 shuttles electrons from NADH, via FMN and iron-sulfur (Fe-S) centers, to quinones in the respiratory chain. The immediate electron acceptor for the enzyme in this species is believed to be ubiquinone. Couples the redox reaction to proton translocation (for every two electrons transferred, four hydrogen ions are translocated across the cytoplasmic membrane), and thus conserves the redox energy in a proton gradient. This subunit may bind ubiquinone. This is NADH-quinone oxidoreductase subunit H from Geobacillus kaustophilus (strain HTA426).